We begin with the raw amino-acid sequence, 405 residues long: Magnesium-protoporphyrin IX monomethyl ester [oxidative] cyclase, chloroplastic (405 aa).

Residues 1–43 (MATEMALVKPISKFSTSSPIFSNSRYGKFTTVRMSSTSQSTTK) constitute a chloroplast transit peptide.

The protein belongs to the AcsF family. Fe cation is required as a cofactor.

It is found in the plastid. The protein resides in the chloroplast. It catalyses the reaction Mg-protoporphyrin IX 13-monomethyl ester + 3 NADPH + 3 O2 + 2 H(+) = 3,8-divinyl protochlorophyllide a + 3 NADP(+) + 5 H2O. Its pathway is porphyrin-containing compound metabolism; chlorophyll biosynthesis. In terms of biological role, catalyzes the formation of the isocyclic ring in chlorophyll biosynthesis. Mediates the cyclase reaction, which results in the formation of divinylprotochlorophyllide (Pchlide) characteristic of all chlorophylls from magnesium-protoporphyrin IX 13-monomethyl ester (MgPMME). This chain is Magnesium-protoporphyrin IX monomethyl ester [oxidative] cyclase, chloroplastic (CRD1), found in Gossypium hirsutum (Upland cotton).